Reading from the N-terminus, the 339-residue chain is Putative ABC transporter ATP-binding protein MG467 homolog (339 aa).

Residues 41–87 are disordered; sequence KKTKKAKPAKVKKVKEPKAKAVKPEQVKPTKTTKAPKPKKPKKQGGL. A compositionally biased stretch (basic residues) spans 42–53; that stretch reads KTKKAKPAKVKK. The segment covering 54–68 has biased composition (basic and acidic residues); sequence VKEPKAKAVKPEQVK. Residues 74 to 83 show a composition bias toward basic residues; that stretch reads KAPKPKKPKK. Positions 112-338 constitute an ABC transporter domain; the sequence is ISIDKMWKHV…IVSNELVRPL (227 aa). 150 to 157 is a binding site for ATP; it reads GPSGSGKT.

It belongs to the ABC transporter superfamily.

The chain is Putative ABC transporter ATP-binding protein MG467 homolog from Mycoplasma pneumoniae (strain ATCC 29342 / M129 / Subtype 1) (Mycoplasmoides pneumoniae).